We begin with the raw amino-acid sequence, 378 residues long: DNA replication and repair protein RecF (378 aa).

31–38 (GENGSGKT) lines the ATP pocket.

The protein belongs to the RecF family.

Its subcellular location is the cytoplasm. In terms of biological role, the RecF protein is involved in DNA metabolism; it is required for DNA replication and normal SOS inducibility. RecF binds preferentially to single-stranded, linear DNA. It also seems to bind ATP. This Teredinibacter turnerae (strain ATCC 39867 / T7901) protein is DNA replication and repair protein RecF.